Reading from the N-terminus, the 183-residue chain is Peptidyl-tRNA hydrolase (183 aa).

Tyr14 serves as a coordination point for tRNA. The Proton acceptor role is filled by His19. 3 residues coordinate tRNA: Tyr64, Asn66, and Asn112.

This sequence belongs to the PTH family. Monomer.

The protein localises to the cytoplasm. The catalysed reaction is an N-acyl-L-alpha-aminoacyl-tRNA + H2O = an N-acyl-L-amino acid + a tRNA + H(+). Its function is as follows. Hydrolyzes ribosome-free peptidyl-tRNAs (with 1 or more amino acids incorporated), which drop off the ribosome during protein synthesis, or as a result of ribosome stalling. Functionally, catalyzes the release of premature peptidyl moieties from peptidyl-tRNA molecules trapped in stalled 50S ribosomal subunits, and thus maintains levels of free tRNAs and 50S ribosomes. The chain is Peptidyl-tRNA hydrolase from Anaplasma phagocytophilum (strain HZ).